Reading from the N-terminus, the 274-residue chain is Coagulation factor IX (274 aa).

Tyr-23 is subject to Sulfotyrosine. An N-linked (GlcNAc...) asparagine glycan is attached at Asn-25. Ser-26 carries the phosphoserine modification. N-linked (GlcNAc...) asparagine glycosylation is present at Asn-35. O-linked (GalNAc...) threonine glycosylation is present at Thr-37. Asn-40 is a glycosylation site (N-linked (GlcNAc...) asparagine). The Peptidase S1 domain occupies 49–274 (VVGGEDAARG…IYTKVSRYEV (226 aa)). A disulfide bridge connects residues Cys-74 and Cys-90. His-89 serves as the catalytic Charge relay system. Glu-103, Asn-105, Glu-110, and Glu-113 together coordinate Ca(2+). The N-linked (GlcNAc...) asparagine glycan is linked to Asn-128. Asp-137 functions as the Charge relay system in the catalytic mechanism. Cystine bridges form between Cys-204–Cys-218 and Cys-229–Cys-257. Residue Ser-233 is the Charge relay system of the active site.

This sequence belongs to the peptidase S1 family. Heterodimer of a light chain and a heavy chain; disulfide-linked. Interacts (inactive and activated) with F11 (activated) in calcium-dependent manner. Interacts with SERPINC1. Activated by factor XIa, which excises the activation peptide. The propeptide can also be removed by snake venom protease. Activated by coagulation factor VIIa-tissue factor (F7-F3) complex in calcium-dependent manner.

The protein resides in the secreted. The enzyme catalyses Selective cleavage of Arg-|-Ile bond in factor X to form factor Xa.. In terms of biological role, factor IX is a vitamin K-dependent plasma protein that participates in the intrinsic pathway of blood coagulation by converting factor X to its active form in the presence of Ca(2+) ions, phospholipids, and factor VIIIa. This is Coagulation factor IX (F9) from Ovis aries (Sheep).